The following is a 386-amino-acid chain: CUE domain-containing protein 1 (386 aa).

Low complexity predominate over residues 1-10; it reads MTSLFRRSSS. The segment at 1–40 is disordered; it reads MTSLFRRSSSGSGGGGTAGARGGGGGTAAPQELNNSRPAR. The span at 11-27 shows a compositional bias: gly residues; that stretch reads GSGGGGTAGARGGGGGT. The 44-residue stretch at 46–89 folds into the CUE domain; that stretch reads EFNQAMDDFKTMFPNMDYDIIECVLRANSGAVDATIDQLLQMNL. Disordered stretches follow at residues 147 to 172, 195 to 225, and 367 to 386; these read LAPP…RYRN, SIQG…DQES, and DFRG…REGQ. Residues 199-209 show a composition bias toward gly residues; that stretch reads NAGGPKPGSGE.

In Homo sapiens (Human), this protein is CUE domain-containing protein 1 (CUEDC1).